Reading from the N-terminus, the 1014-residue chain is UvrABC system protein A (1014 aa).

An ATP-binding site is contributed by 32-39 (GLSGSGKS). ABC transporter domains are found at residues 314-592 (WSHG…AESQ) and 612-941 (QDPS…KFLR). Residue 645 to 652 (GVSGSGKS) participates in ATP binding. The C4-type zinc finger occupies 744–770 (CENCAGDGTIKIEMNFLPDVYVPCEVC). The span at 976–995 (TKTVTGTAAKKATATRTAKT) shows a compositional bias: low complexity. The disordered stretch occupies residues 976 to 1014 (TKTVTGTAAKKATATRTAKTAVKKAAKPAAKKTTRTSKA). Over residues 996–1014 (AVKKAAKPAAKKTTRTSKA) the composition is skewed to basic residues.

This sequence belongs to the ABC transporter superfamily. UvrA family. As to quaternary structure, forms a heterotetramer with UvrB during the search for lesions.

The protein resides in the cytoplasm. Its function is as follows. The UvrABC repair system catalyzes the recognition and processing of DNA lesions. UvrA is an ATPase and a DNA-binding protein. A damage recognition complex composed of 2 UvrA and 2 UvrB subunits scans DNA for abnormalities. When the presence of a lesion has been verified by UvrB, the UvrA molecules dissociate. The sequence is that of UvrABC system protein A from Streptomyces coelicolor (strain ATCC BAA-471 / A3(2) / M145).